Reading from the N-terminus, the 424-residue chain is Steryl acetyl hydrolase 1 (424 aa).

The residue at position 2 (Ala-2) is an N-acetylalanine. The Cytoplasmic segment spans residues 2-45; the sequence is AANSGLDSKVEYYRLQENEIISAVSSEDADQNDAGFRLSTIHLH. The chain crosses the membrane as a helical; Signal-anchor for type II membrane protein span at residues 46 to 66; the sequence is LFHGLKFAALLFTVVPVFIIL. At 67 to 424 the chain is on the lumenal side; it reads DSMKIIFQRK…IARILEFMQS (358 aa). Residue Asn-85 is glycosylated (N-linked (GlcNAc...) asparagine). Positions 176 to 178 match the Involved in the stabilization of the negatively charged intermediate by the formation of the oxyanion hole motif; it reads HGG. The active site involves Ser-250. A glycan (N-linked (GlcNAc...) asparagine) is linked at Asn-283. His-395 is a catalytic residue. Asn-401 carries N-linked (GlcNAc...) asparagine glycosylation.

Belongs to the 'GDXG' lipolytic enzyme family.

The protein localises to the endoplasmic reticulum membrane. In terms of biological role, required for the deacetylation of acetylated sterols. Involved in the resistance to eugenol and pregnenolone toxicity. The sequence is that of Steryl acetyl hydrolase 1 (SAY1) from Saccharomyces cerevisiae (strain ATCC 204508 / S288c) (Baker's yeast).